The sequence spans 581 residues: Protein SPT2 homolog (581 aa).

Positions 26–35 are enriched in low complexity; that stretch reads YYSTKYSPPK. Disordered stretches follow at residues 26–50 and 145–495; these read YYSTKYSPPKKQSKESKQLSSNIQK and QEDK…EYDS. Residues 36-76 are a coiled coil; it reads KQSKESKQLSSNIQKFLQKKEAEEAEKKRLERQKLNDLLAK. The segment covering 162 to 181 has biased composition (basic and acidic residues); the sequence is SGTKERVKAAITREREEAKG. Composition is skewed to polar residues over residues 182 to 197 and 204 to 213; these read NTRQKSSTSTLPSSAT and VARSYSTSKT. Basic and acidic residues-rich tracts occupy residues 218–236 and 256–312; these read NAEKLEEERKKRQEEEQRR and LAEK…KETP. A coiled-coil region spans residues 276–307; that stretch reads ERLLSAREKRELEERQRQQEQRAQRLKMRESE. Over residues 352-376 the composition is skewed to low complexity; sequence SSASSTSLSSSNSHSSASRSSVSSS. A compositionally biased stretch (polar residues) spans 447 to 461; the sequence is TRQTPSSDVQRSQGG. Acidic residues predominate over residues 486 to 495; it reads DDDDEDEYDS.

It belongs to the SPT2 family.

This chain is Protein SPT2 homolog, found in Drosophila melanogaster (Fruit fly).